Reading from the N-terminus, the 239-residue chain is Small ribosomal subunit protein uS2 (239 aa).

Belongs to the universal ribosomal protein uS2 family.

The polypeptide is Small ribosomal subunit protein uS2 (Synechococcus sp. (strain CC9902)).